We begin with the raw amino-acid sequence, 607 residues long: Elongation factor 4 (607 aa).

Positions 11-193 (ENIRNFSIIA…KIVDVVPAPD (183 aa)) constitute a tr-type G domain. GTP-binding positions include 23–28 (DHGKST) and 140–143 (NKID).

This sequence belongs to the TRAFAC class translation factor GTPase superfamily. Classic translation factor GTPase family. LepA subfamily.

The protein localises to the cell membrane. The catalysed reaction is GTP + H2O = GDP + phosphate + H(+). In terms of biological role, required for accurate and efficient protein synthesis under certain stress conditions. May act as a fidelity factor of the translation reaction, by catalyzing a one-codon backward translocation of tRNAs on improperly translocated ribosomes. Back-translocation proceeds from a post-translocation (POST) complex to a pre-translocation (PRE) complex, thus giving elongation factor G a second chance to translocate the tRNAs correctly. Binds to ribosomes in a GTP-dependent manner. This is Elongation factor 4 from Staphylococcus epidermidis (strain ATCC 35984 / DSM 28319 / BCRC 17069 / CCUG 31568 / BM 3577 / RP62A).